The sequence spans 263 residues: Type II restriction enzyme TaqI (263 aa).

Only 15% of purified enzyme (upon expression in E.coli) can be sequenced, suggesting the remainder has a blocked N-terminus.

It catalyses the reaction Endonucleolytic cleavage of DNA to give specific double-stranded fragments with terminal 5'-phosphates.. Functionally, a P subtype restriction enzyme that recognizes the double-stranded sequence 5'-TCGA-3' and cleaves after T-1. In Thermus aquaticus, this protein is Type II restriction enzyme TaqI (taqIR).